Consider the following 123-residue polypeptide: Large ribosomal subunit protein bL12 (123 aa).

The protein belongs to the bacterial ribosomal protein bL12 family. In terms of assembly, homodimer. Part of the ribosomal stalk of the 50S ribosomal subunit. Forms a multimeric L10(L12)X complex, where L10 forms an elongated spine to which 2 to 4 L12 dimers bind in a sequential fashion. Binds GTP-bound translation factors.

Forms part of the ribosomal stalk which helps the ribosome interact with GTP-bound translation factors. Is thus essential for accurate translation. This Parvibaculum lavamentivorans (strain DS-1 / DSM 13023 / NCIMB 13966) protein is Large ribosomal subunit protein bL12.